The sequence spans 265 residues: 4-diphosphocytidyl-2-C-methyl-D-erythritol kinase (265 aa).

Residue K8 is part of the active site. ATP is bound at residue 95 to 105 (PIGAGLGGGSS). The active site involves D135.

Belongs to the GHMP kinase family. IspE subfamily.

It carries out the reaction 4-CDP-2-C-methyl-D-erythritol + ATP = 4-CDP-2-C-methyl-D-erythritol 2-phosphate + ADP + H(+). The protein operates within isoprenoid biosynthesis; isopentenyl diphosphate biosynthesis via DXP pathway; isopentenyl diphosphate from 1-deoxy-D-xylulose 5-phosphate: step 3/6. Functionally, catalyzes the phosphorylation of the position 2 hydroxy group of 4-diphosphocytidyl-2C-methyl-D-erythritol. This Ureaplasma parvum serovar 3 (strain ATCC 27815 / 27 / NCTC 11736) protein is 4-diphosphocytidyl-2-C-methyl-D-erythritol kinase.